The chain runs to 176 residues: ATP-dependent protease subunit HslV (176 aa).

Thr5 is an active-site residue. Positions 161, 164, and 167 each coordinate Na(+).

It belongs to the peptidase T1B family. HslV subfamily. A double ring-shaped homohexamer of HslV is capped on each side by a ring-shaped HslU homohexamer. The assembly of the HslU/HslV complex is dependent on binding of ATP.

Its subcellular location is the cytoplasm. The enzyme catalyses ATP-dependent cleavage of peptide bonds with broad specificity.. Its activity is regulated as follows. Allosterically activated by HslU binding. Functionally, protease subunit of a proteasome-like degradation complex believed to be a general protein degrading machinery. This is ATP-dependent protease subunit HslV from Desulforamulus reducens (strain ATCC BAA-1160 / DSM 100696 / MI-1) (Desulfotomaculum reducens).